The primary structure comprises 451 residues: Trigger factor (451 aa).

The PPIase FKBP-type domain occupies 170–256 (DHIATIDYCE…LTALKYKDLP (87 aa)).

Belongs to the FKBP-type PPIase family. Tig subfamily.

The protein localises to the cytoplasm. It catalyses the reaction [protein]-peptidylproline (omega=180) = [protein]-peptidylproline (omega=0). Its function is as follows. Involved in protein export. Acts as a chaperone by maintaining the newly synthesized protein in an open conformation. Functions as a peptidyl-prolyl cis-trans isomerase. The sequence is that of Trigger factor from Treponema denticola (strain ATCC 35405 / DSM 14222 / CIP 103919 / JCM 8153 / KCTC 15104).